Here is a 552-residue protein sequence, read N- to C-terminus: Capsid protein precursor (552 aa).

The disordered stretch occupies residues 1-41 (MKQNDTKKTTQRRNSKKYSSKTNRGTKRAPRDQEVGTGAQE). The span at 9-28 (TTQRRNSKKYSSKTNRGTKR) shows a compositional bias: basic residues.

As to quaternary structure, homodimer. Post-translationally, the 7 kDa polypeptide is acetylated. In terms of processing, autocatalytic proteolysis releases a post-translationally modified peptide that remains associated with nucleic acid within the virion. This peptide is observed only when nucleic acid is packaged in the capsid.

Its subcellular location is the virion. Its function is as follows. The capsid protein self-assembles to form an icosahedral capsid with a T=2 symmetry made of 120 subunits. The protein is Capsid protein precursor (Segment-1) of Human picobirnavirus (strain Human/Thailand/Hy005102/-) (PBV).